The sequence spans 859 residues: MRRWFKKTLPRPPDEEESAGLTNKDIVETNHLYPTITNLSLNSDTSSILFDKNKKPLKPKIIIPDKEFDLDYYLKDETESIQSPFEGFTAQPNFSNFNKQGNTMNREANFQRTNEKIQRNKSIKRVKLFHGNLILDCPIPKKLLVTLPQQTEREFAYMRYSAATCDPQDFSKSLFTLRQPLFFQPRKTEICIAITMYNEDEVLFARTMHSVMKNISHLCTRKNSQVWGKDAWKKVVVCIISDGRTKIHPRTLAYLAAIGVYQDGIAKNQVNDKEVKAHIYEYTTQLSIDPNLKFKGSDRGIVPVQMIFCLKEKNQKKLNSHLWFFQAFCPILKPEVCILLDAGTRPGDQSIYHLWKSFDLNPQVAGACGEIVVMKGKLGSGLINPLVATQNFEYKMSNILDKPVESVFGFISVLPGAFSAYRFEALQNDSQGNGPLASYFKGELQNTGKSGIFEANMYLAEDRILCFELVSKKNEAWILHYVKSAYADTDVPDRIPEFVLQRRRWLNGSFFAAAYAICHYYRFFRTSHTISRKFMLSIEFIYQLATIVFGWFNIGNFFIIFYILTSSLASTSANFLPGEILFRIAIWIYASLLVTCFVLALGNRPHGSPNFYLSMVIMYSILMGYLLFCSGWIAYRAISDAIHNASSTSSSYTSALLNSNVFINIVISLSSTYGMYLVVSIISFDPWHMFTSFVQYIFLSIMYTNVLNVYAFCNTHDVSWGTKGDHFTNNDLGVARLLQKGADVEIAIPTNQSDIDAKYEDAVKLLASPSLEFNSPIINHGEQEDFYKNFRTYVVLTWILSNLFLVGIVLSIPKINGISISNNETSAYLSFLLWSVVAFSVFRFIGCIFYLFIRLCTGE.

Residues 1 to 22 (MRRWFKKTLPRPPDEEESAGLT) are disordered. Helical transmembrane passes span 544–564 (LATI…FYIL), 615–635 (MVIM…WIAY), 662–682 (FINI…VSII), 793–813 (YVVL…LSIP), and 833–853 (LWSV…YLFI).

The protein belongs to the chitin synthase family.

The protein resides in the cell membrane. It carries out the reaction [(1-&gt;4)-N-acetyl-beta-D-glucosaminyl](n) + UDP-N-acetyl-alpha-D-glucosamine = [(1-&gt;4)-N-acetyl-beta-D-glucosaminyl](n+1) + UDP + H(+). Its function is as follows. Polymerizes chitin, a structural polymer of the cell wall and septum, by transferring the sugar moiety of UDP-GlcNAc to the non-reducing end of the growing chitin polymer. This is Chitin synthase 1 (chs1) from Schizosaccharomyces pombe (strain 972 / ATCC 24843) (Fission yeast).